The sequence spans 390 residues: Succinyl-diaminopimelate desuccinylase (390 aa).

His-74 is a binding site for Zn(2+). The active site involves Asp-76. Asp-107 serves as a coordination point for Zn(2+). The Proton acceptor role is filled by Glu-140. Zn(2+)-binding residues include Glu-141, Glu-169, and His-363.

The protein belongs to the peptidase M20A family. DapE subfamily. Homodimer. Zn(2+) is required as a cofactor. It depends on Co(2+) as a cofactor.

It carries out the reaction N-succinyl-(2S,6S)-2,6-diaminopimelate + H2O = (2S,6S)-2,6-diaminopimelate + succinate. The protein operates within amino-acid biosynthesis; L-lysine biosynthesis via DAP pathway; LL-2,6-diaminopimelate from (S)-tetrahydrodipicolinate (succinylase route): step 3/3. Catalyzes the hydrolysis of N-succinyl-L,L-diaminopimelic acid (SDAP), forming succinate and LL-2,6-diaminopimelate (DAP), an intermediate involved in the bacterial biosynthesis of lysine and meso-diaminopimelic acid, an essential component of bacterial cell walls. This is Succinyl-diaminopimelate desuccinylase from Bartonella quintana (strain Toulouse) (Rochalimaea quintana).